The sequence spans 186 residues: ATP synthase subunit delta (186 aa).

It belongs to the ATPase delta chain family. As to quaternary structure, F-type ATPases have 2 components, F(1) - the catalytic core - and F(0) - the membrane proton channel. F(1) has five subunits: alpha(3), beta(3), gamma(1), delta(1), epsilon(1). F(0) has three main subunits: a(1), b(2) and c(10-14). The alpha and beta chains form an alternating ring which encloses part of the gamma chain. F(1) is attached to F(0) by a central stalk formed by the gamma and epsilon chains, while a peripheral stalk is formed by the delta and b chains.

It is found in the cell inner membrane. Functionally, f(1)F(0) ATP synthase produces ATP from ADP in the presence of a proton or sodium gradient. F-type ATPases consist of two structural domains, F(1) containing the extramembraneous catalytic core and F(0) containing the membrane proton channel, linked together by a central stalk and a peripheral stalk. During catalysis, ATP synthesis in the catalytic domain of F(1) is coupled via a rotary mechanism of the central stalk subunits to proton translocation. In terms of biological role, this protein is part of the stalk that links CF(0) to CF(1). It either transmits conformational changes from CF(0) to CF(1) or is implicated in proton conduction. The chain is ATP synthase subunit delta from Brucella melitensis biotype 2 (strain ATCC 23457).